We begin with the raw amino-acid sequence, 648 residues long: Acetyl-coenzyme A synthetase (648 aa).

CoA contacts are provided by residues 190–193 (RGGK), Thr308, and Asn332. ATP contacts are provided by residues 384-386 (GEP), 408-413 (DTWWQT), Asp497, and Arg512. Ser520 serves as a coordination point for CoA. Residue Arg523 participates in ATP binding. Val534, His536, and Val539 together coordinate Mg(2+). Arg581 serves as a coordination point for CoA. Lys606 is modified (N6-acetyllysine).

Belongs to the ATP-dependent AMP-binding enzyme family. Mg(2+) serves as cofactor. Acetylated. Deacetylation by the SIR2-homolog deacetylase activates the enzyme.

It carries out the reaction acetate + ATP + CoA = acetyl-CoA + AMP + diphosphate. Its function is as follows. Catalyzes the conversion of acetate into acetyl-CoA (AcCoA), an essential intermediate at the junction of anabolic and catabolic pathways. AcsA undergoes a two-step reaction. In the first half reaction, AcsA combines acetate with ATP to form acetyl-adenylate (AcAMP) intermediate. In the second half reaction, it can then transfer the acetyl group from AcAMP to the sulfhydryl group of CoA, forming the product AcCoA. In Bradyrhizobium diazoefficiens (strain JCM 10833 / BCRC 13528 / IAM 13628 / NBRC 14792 / USDA 110), this protein is Acetyl-coenzyme A synthetase.